The chain runs to 129 residues: Glycine cleavage system H protein (129 aa).

In terms of domain architecture, Lipoyl-binding spans 23-104 (SVTVGITHHA…AYTAWLFKIK (82 aa)). N6-lipoyllysine is present on lysine 64.

Belongs to the GcvH family. In terms of assembly, the glycine cleavage system is composed of four proteins: P, T, L and H. (R)-lipoate serves as cofactor.

Its function is as follows. The glycine cleavage system catalyzes the degradation of glycine. The H protein shuttles the methylamine group of glycine from the P protein to the T protein. In Thiobacillus denitrificans (strain ATCC 25259 / T1), this protein is Glycine cleavage system H protein.